A 136-amino-acid chain; its full sequence is Large ribosomal subunit protein uL16 (136 aa).

The protein belongs to the universal ribosomal protein uL16 family. In terms of assembly, part of the 50S ribosomal subunit.

In terms of biological role, binds 23S rRNA and is also seen to make contacts with the A and possibly P site tRNAs. The protein is Large ribosomal subunit protein uL16 of Shewanella piezotolerans (strain WP3 / JCM 13877).